Consider the following 556-residue polypeptide: Formate--tetrahydrofolate ligase (556 aa).

65–72 (TPAGEGKS) is a binding site for ATP.

Belongs to the formate--tetrahydrofolate ligase family.

It carries out the reaction (6S)-5,6,7,8-tetrahydrofolate + formate + ATP = (6R)-10-formyltetrahydrofolate + ADP + phosphate. The protein operates within one-carbon metabolism; tetrahydrofolate interconversion. In Streptococcus uberis (strain ATCC BAA-854 / 0140J), this protein is Formate--tetrahydrofolate ligase.